A 386-amino-acid chain; its full sequence is Mannitol-1-phosphate 5-dehydrogenase (386 aa).

NAD(+) is bound at residue 4-15 (AIHFGGGNIGRG). The active site involves K211.

This sequence belongs to the mannitol dehydrogenase family. Monomer.

It carries out the reaction D-mannitol 1-phosphate + NAD(+) = beta-D-fructose 6-phosphate + NADH + H(+). Catalyzes the NAD(H)-dependent interconversion of D-fructose 6-phosphate and D-mannitol 1-phosphate in the mannitol metabolic pathway. The polypeptide is Mannitol-1-phosphate 5-dehydrogenase (mpdA) (Emericella nidulans (strain FGSC A4 / ATCC 38163 / CBS 112.46 / NRRL 194 / M139) (Aspergillus nidulans)).